The primary structure comprises 303 residues: Glutamyl-Q tRNA(Asp) synthetase (303 aa).

Residues 9-13 (RFAPS) and Glu45 each bind L-glutamate. The 'HIGH' region signature appears at 12-22 (PSPTGAMHLGN). Residues Cys100, Cys102, Tyr125, and Cys129 each coordinate Zn(2+). Positions 184 and 202 each coordinate L-glutamate. A 'KMSKS' region motif is present at residues 240–244 (RLAKR). Lys243 is a binding site for ATP.

It belongs to the class-I aminoacyl-tRNA synthetase family. GluQ subfamily. Zn(2+) is required as a cofactor.

Its function is as follows. Catalyzes the tRNA-independent activation of glutamate in presence of ATP and the subsequent transfer of glutamate onto a tRNA(Asp). Glutamate is transferred on the 2-amino-5-(4,5-dihydroxy-2-cyclopenten-1-yl) moiety of the queuosine in the wobble position of the QUC anticodon. This chain is Glutamyl-Q tRNA(Asp) synthetase, found in Deinococcus geothermalis (strain DSM 11300 / CIP 105573 / AG-3a).